The primary structure comprises 98 residues: NADH-ubiquinone oxidoreductase chain 4L (98 aa).

3 helical membrane passes run 2–22, 29–49, and 61–81; these read SLVYVNIMIAFSVSFLGLLMF, SLLCLEGMMLSLFILGTILIL, and IIMLVFAACEAAVGLSLLVMV.

This sequence belongs to the complex I subunit 4L family. As to quaternary structure, core subunit of respiratory chain NADH dehydrogenase (Complex I) which is composed of 45 different subunits.

The protein localises to the mitochondrion inner membrane. The catalysed reaction is a ubiquinone + NADH + 5 H(+)(in) = a ubiquinol + NAD(+) + 4 H(+)(out). Functionally, core subunit of the mitochondrial membrane respiratory chain NADH dehydrogenase (Complex I) which catalyzes electron transfer from NADH through the respiratory chain, using ubiquinone as an electron acceptor. Part of the enzyme membrane arm which is embedded in the lipid bilayer and involved in proton translocation. In Galemys pyrenaicus (Iberian desman), this protein is NADH-ubiquinone oxidoreductase chain 4L (MT-ND4L).